The sequence spans 101 residues: Small ribosomal subunit protein uS14 (101 aa).

The disordered stretch occupies residues 1–26 (MAKVSSIKKNESRKKKSQSLHNKRSA). A compositionally biased stretch (basic residues) spans 11 to 26 (ESRKKKSQSLHNKRSA).

It belongs to the universal ribosomal protein uS14 family. As to quaternary structure, part of the 30S ribosomal subunit. Contacts proteins S3 and S10.

Functionally, binds 16S rRNA, required for the assembly of 30S particles and may also be responsible for determining the conformation of the 16S rRNA at the A site. The chain is Small ribosomal subunit protein uS14 from Rickettsia felis (strain ATCC VR-1525 / URRWXCal2) (Rickettsia azadi).